A 185-amino-acid chain; its full sequence is Hypoxanthine/guanine phosphoribosyltransferase (185 aa).

The protein belongs to the purine/pyrimidine phosphoribosyltransferase family. Archaeal HPRT subfamily. As to quaternary structure, homodimer.

Its subcellular location is the cytoplasm. It catalyses the reaction IMP + diphosphate = hypoxanthine + 5-phospho-alpha-D-ribose 1-diphosphate. It carries out the reaction GMP + diphosphate = guanine + 5-phospho-alpha-D-ribose 1-diphosphate. It participates in purine metabolism; IMP biosynthesis via salvage pathway; IMP from hypoxanthine: step 1/1. Catalyzes a salvage reaction resulting in the formation of IMP that is energically less costly than de novo synthesis. This Aciduliprofundum boonei (strain DSM 19572 / T469) protein is Hypoxanthine/guanine phosphoribosyltransferase.